The sequence spans 23 residues: Major prohead-scaffolding core protein Gp22 (23 aa).

A disordered region spans residues 1 to 23 (KAEEEVEKNKEEAEEKAEKKIAE). A compositionally biased stretch (basic and acidic residues) spans 7–23 (EKNKEEAEEKAEKKIAE).

In terms of biological role, gp22 functions in head assembly. Functionally, internal peptide VII: Cleavage product of Gp22 that is incorporated into the mature phage head. In Enterobacteria phage T6 (Bacteriophage T6), this protein is Major prohead-scaffolding core protein Gp22 (22).